The sequence spans 197 residues: Imidazoleglycerol-phosphate dehydratase (197 aa).

The protein belongs to the imidazoleglycerol-phosphate dehydratase family.

Its subcellular location is the cytoplasm. The enzyme catalyses D-erythro-1-(imidazol-4-yl)glycerol 3-phosphate = 3-(imidazol-4-yl)-2-oxopropyl phosphate + H2O. It participates in amino-acid biosynthesis; L-histidine biosynthesis; L-histidine from 5-phospho-alpha-D-ribose 1-diphosphate: step 6/9. The sequence is that of Imidazoleglycerol-phosphate dehydratase from Saccharophagus degradans (strain 2-40 / ATCC 43961 / DSM 17024).